The chain runs to 89 residues: Small ribosomal subunit protein uS15 (89 aa).

The protein belongs to the universal ribosomal protein uS15 family. As to quaternary structure, part of the 30S ribosomal subunit. Forms a bridge to the 50S subunit in the 70S ribosome, contacting the 23S rRNA.

Functionally, one of the primary rRNA binding proteins, it binds directly to 16S rRNA where it helps nucleate assembly of the platform of the 30S subunit by binding and bridging several RNA helices of the 16S rRNA. Forms an intersubunit bridge (bridge B4) with the 23S rRNA of the 50S subunit in the ribosome. In Pseudomonas putida (strain GB-1), this protein is Small ribosomal subunit protein uS15.